The sequence spans 598 residues: Autophagy-related protein 22-1 (598 aa).

The segment at Met1–Pro20 is disordered. A helical membrane pass occupies residues Gly28–Leu48. N-linked (GlcNAc...) asparagine glycans are attached at residues Asn74 and Asn80. Helical transmembrane passes span Ser111 to Val131, Phe159 to Val179, and Gly182 to Val202. Positions Asp207–Arg238 are disordered. Residues Ser212–Arg224 are compositionally biased toward low complexity. Over residues Arg227–Arg238 the composition is skewed to basic and acidic residues. A helical membrane pass occupies residues Val263–Ile283. An N-linked (GlcNAc...) asparagine glycan is attached at Asn285. Transmembrane regions (helical) follow at residues Thr297–Leu317, Val363–Thr383, Ala400–Ile420, Ile431–Leu451, Trp465–Tyr485, Phe489–Thr509, and Ala534–Val554. The tract at residues His575–Asp598 is disordered. The segment covering Ser585 to Asp598 has biased composition (basic and acidic residues).

The protein belongs to the ATG22 family.

It localises to the vacuole membrane. Vacuolar effluxer which mediate the efflux of amino acids resulting from autophagic degradation. The release of autophagic amino acids allows the maintenance of protein synthesis and viability during nitrogen starvation. The protein is Autophagy-related protein 22-1 (atg22-1) of Sclerotinia sclerotiorum (strain ATCC 18683 / 1980 / Ss-1) (White mold).